A 389-amino-acid chain; its full sequence is WAT1-related protein At1g21890 (389 aa).

A run of 10 helical transmembrane segments spans residues 13–33, 40–60, 73–93, 102–122, 142–162, 191–211, 225–245, 260–280, 287–307, and 312–332; these read LAMISMQFGYAGMYIITMVSL, YVLAVYRHAIATAVIAPFALF, IFLQIALLGFIEPVLDQNLYY, TFASATANVLPAITFVLAIIF, VITVSGALLMTLYKGPIVDFI, WIPGTLMLLGRTFGWAGFFIL, LTTLICLMGTLEGTAVSLVTV, FAAAYSGVICSGVAYYVQGVV, VFVATFNPLCVVITAALGVVV, and IHLGSVIGTLFIIVGLYTVVW. EamA domains follow at residues 23–150 and 205–331; these read AGMY…GALL and WAGF…YTVV. Residues 339-361 form a disordered region; the sequence is RMTDDDEDCKGLPIKSPVKPVDT.

It belongs to the drug/metabolite transporter (DMT) superfamily. Plant drug/metabolite exporter (P-DME) (TC 2.A.7.4) family.

The protein localises to the membrane. The chain is WAT1-related protein At1g21890 from Arabidopsis thaliana (Mouse-ear cress).